Consider the following 468-residue polypeptide: Pituitary adenylate cyclase-activating polypeptide type I receptor (468 aa).

The N-terminal stretch at 1 to 20 (MAGVVHVSLAALLLLPMAPA) is a signal peptide. Residues 21 to 152 (MHSDCIFKKE…TGDQDYYYLS (132 aa)) are Extracellular-facing. Disulfide bonds link cysteine 34-cysteine 63, cysteine 54-cysteine 118, and cysteine 77-cysteine 134. 3 N-linked (GlcNAc...) asparagine glycosylation sites follow: asparagine 48, asparagine 60, and asparagine 117. Residues 125–139 (EPFPHYFDACGFDEY) form an important for ADCYAP1/PACAP ligand binding and specificity region. A helical transmembrane segment spans residues 153-177 (VKALYTVGYSTSLVTLTTAMVILCR). Over 178–187 (FRKLHCTRNF) the chain is Cytoplasmic. Residues 188 to 208 (IHMNLFVSFMLRAISVFIKDW) traverse the membrane as a helical segment. At 209–223 (ILYAEQDSNHCFIST) the chain is on the extracellular side. Residues 224 to 249 (VECKAVMVFFHYCVVSNYFWLFIEGL) traverse the membrane as a helical segment. A disulfide bridge connects residues cysteine 226 and cysteine 296. The Cytoplasmic portion of the chain corresponds to 250-267 (YLFTLLVETFFPERRYFY). Residues 268–290 (WYTIIGWGTPTVCVTVWATLRLY) traverse the membrane as a helical segment. The Extracellular portion of the chain corresponds to 291–302 (FDDTGCWDMNDS). The N-linked (GlcNAc...) asparagine glycan is linked to asparagine 300. A helical membrane pass occupies residues 303–329 (TALWWVIKGPVVGSIMVNFVLFIGIIV). Residues 330–347 (ILVQKLQSPDMGGNESSI) lie on the Cytoplasmic side of the membrane. Residues 348–374 (YLRLARSTLLLIPLFGIHYTVFAFSPE) traverse the membrane as a helical segment. Residue asparagine 375 is glycosylated (N-linked (GlcNAc...) asparagine). At 375-379 (NVSKR) the chain is on the extracellular side. Residues 380 to 403 (ERLVFELGLGSFQGFVVAVLYCFL) form a helical membrane-spanning segment. Residues 404-468 (NGEVQAEIKR…SGLPADNLAT (65 aa)) are Cytoplasmic-facing. Residues serine 434 and serine 447 each carry the phosphoserine modification.

The protein belongs to the G-protein coupled receptor 2 family. As to quaternary structure, interacts with maxadilan, a vasodilator peptide from Lutzomyia longipalpis saliva; the interaction results in ADCYAP1R1 activation. Most abundant in the brain, low expression in the lung, liver, thymus, spleen, pancreas and placenta.

The protein resides in the cell membrane. Its activity is regulated as follows. Several synthetic peptides derived from maxadilan, a vasodilator peptide from Lutzomyia longipalpis saliva, act as antagonists for ADCYAP1R1. In terms of biological role, g protein-coupled receptor activated by the neuropeptide pituitary adenylate cyclase-activating polypeptide (ADCYAP1/PACAP). Binds both PACAP27 and PACAP38 bioactive peptides. Ligand binding causes a conformation change that triggers signaling via guanine nucleotide-binding proteins (G proteins) and modulates the activity of downstream effectors. Activates cAMP-dependent pathway. May regulate the release of adrenocorticotropin, luteinizing hormone, growth hormone, prolactin, epinephrine, and catecholamine. May play a role in spermatogenesis and sperm motility. Causes smooth muscle relaxation and secretion in the gastrointestinal tract. The polypeptide is Pituitary adenylate cyclase-activating polypeptide type I receptor (Homo sapiens (Human)).